The sequence spans 588 residues: ATP-dependent lipid A-core flippase (588 aa).

The next 6 helical transmembrane spans lie at 23–43 (FWPVLLLGVLANILYSGIDAG), 56–76 (FITIDLDFVKQIPLIVLIGIT), 141–161 (DALTDFIQNICLVIGLLTVMM), 162–182 (VICWQLSLMFLLTIPFVGIIV), 257–277 (LVIAIGIAMIIMAAIHLSTVI), and 278–298 (TISAGSFLAIIAAMLQLIKPM). In terms of domain architecture, ABC transmembrane type-1 spans 28–310 (LLGVLANILY…LTTLNATIQR (283 aa)). An ABC transporter domain is found at 342 to 576 (IEFKHVYHAY…DGHYAQLYKV (235 aa)). Residue 375-382 (GHSGSGKT) participates in ATP binding.

It belongs to the ABC transporter superfamily. Lipid exporter (TC 3.A.1.106) family. In terms of assembly, homodimer.

Its subcellular location is the cell inner membrane. The catalysed reaction is ATP + H2O + lipid A-core oligosaccharideSide 1 = ADP + phosphate + lipid A-core oligosaccharideSide 2.. In terms of biological role, involved in lipopolysaccharide (LPS) biosynthesis. Translocates lipid A-core from the inner to the outer leaflet of the inner membrane. Transmembrane domains (TMD) form a pore in the inner membrane and the ATP-binding domain (NBD) is responsible for energy generation. In Legionella pneumophila (strain Lens), this protein is ATP-dependent lipid A-core flippase.